A 165-amino-acid chain; its full sequence is 3-isopropylmalate dehydratase small subunit (165 aa).

The protein belongs to the LeuD family. LeuD type 2 subfamily. In terms of assembly, heterodimer of LeuC and LeuD.

The catalysed reaction is (2R,3S)-3-isopropylmalate = (2S)-2-isopropylmalate. Its pathway is amino-acid biosynthesis; L-leucine biosynthesis; L-leucine from 3-methyl-2-oxobutanoate: step 2/4. In terms of biological role, catalyzes the isomerization between 2-isopropylmalate and 3-isopropylmalate, via the formation of 2-isopropylmaleate. This is 3-isopropylmalate dehydratase small subunit from Saccharolobus islandicus (strain Y.G.57.14 / Yellowstone #1) (Sulfolobus islandicus).